The chain runs to 61 residues: Large ribosomal subunit protein uL29 (61 aa).

The protein belongs to the universal ribosomal protein uL29 family.

The protein is Large ribosomal subunit protein uL29 of Nitratidesulfovibrio vulgaris (strain DSM 19637 / Miyazaki F) (Desulfovibrio vulgaris).